The chain runs to 335 residues: UPF0353 protein MMAR_2288 (335 aa).

2 helical membrane passes run 18–38 (WFFL…VLQL) and 67–87 (IPAM…AGPT). The VWFA domain maps to 98-294 (VVMLVIDVSQ…AELNSVYASL (197 aa)). Residues 309 to 329 (MGWLRLGALVLVAAALAALLI) traverse the membrane as a helical segment.

This sequence belongs to the UPF0353 family.

It is found in the cell membrane. The polypeptide is UPF0353 protein MMAR_2288 (Mycobacterium marinum (strain ATCC BAA-535 / M)).